We begin with the raw amino-acid sequence, 376 residues long: Queuine tRNA-ribosyltransferase accessory subunit 2 (376 aa).

The Zn(2+) site is built by Cys-323, Cys-325, Cys-328, and His-354.

Belongs to the queuine tRNA-ribosyltransferase family. QTRT2 subfamily. Heterodimer of a catalytic subunit and an accessory subunit. It depends on Zn(2+) as a cofactor.

The protein resides in the cytoplasm. Non-catalytic subunit of the queuine tRNA-ribosyltransferase (TGT) that catalyzes the base-exchange of a guanine (G) residue with queuine (Q) at position 34 (anticodon wobble position) in tRNAs with GU(N) anticodons (tRNA-Asp, -Asn, -His and -Tyr), resulting in the hypermodified nucleoside queuosine (7-(((4,5-cis-dihydroxy-2-cyclopenten-1-yl)amino)methyl)-7-deazaguanosine). In Caenorhabditis briggsae, this protein is Queuine tRNA-ribosyltransferase accessory subunit 2.